Consider the following 315-residue polypeptide: Methionyl-tRNA formyltransferase (315 aa).

A (6S)-5,6,7,8-tetrahydrofolate-binding site is contributed by 113-116 (SLLP).

It belongs to the Fmt family.

The enzyme catalyses L-methionyl-tRNA(fMet) + (6R)-10-formyltetrahydrofolate = N-formyl-L-methionyl-tRNA(fMet) + (6S)-5,6,7,8-tetrahydrofolate + H(+). Functionally, attaches a formyl group to the free amino group of methionyl-tRNA(fMet). The formyl group appears to play a dual role in the initiator identity of N-formylmethionyl-tRNA by promoting its recognition by IF2 and preventing the misappropriation of this tRNA by the elongation apparatus. The sequence is that of Methionyl-tRNA formyltransferase from Escherichia coli O139:H28 (strain E24377A / ETEC).